A 1067-amino-acid chain; its full sequence is MITRLSGACLRRSGAKRNWPREHLVHRSLLASFSTTQRVLKCSVGPFRTSNVVFKSKEPKDNKPLDNKNDPKKTHNEDESHTNESLPSTDKKKKKDNDDFKQNLKSSSNKTEEKYSATQASKSKNDEFELGGEENEDEMPLNGEFNKNVPAKYSVPDVYPQLLALPIARRPLFPGFYKAIVTKNPSVSEAIKELIKKRQPYIGAFLLKDENTDTDVITNIDQVYPVGVFAQITSIFPAKSGSEPALTAVLYPHRRIRITELIPPKEDADSAASSDAAELETDKSSNLSSNGEVKSDLKQDNGKEEPEKEVESTPSILQNFKVSLVNVENVPNEPFKRQDPVIKAVTSEIMNVFKDIANVSPLFREQIANFSISQTSGNVFDEPAKLADFAAAVSAADHRELQEVLEATNIGDRLQKALYVLKKELLNAQLQHKINKEIEQKITQRHKEYLLTEQLKQIKRELGQELDSKEALVTEFKKRTESLSMPDHVKKVFNDELSKFQHLEPMAAEFNITRNYLDWITQLPWGKRSVENFDLDHAKEVLDRDHYGLKDVKDRVLELVAVGKLRGTMQGKIMCLVGPPGVGKTSVGKSIASALNREFFRFSVGGLTDVAEIKGHRRTYIGAMPGKIVQALKKVQTENPLILIDEIDKVGKSHQGDPASALLELLDSEQNSAFLDYYMDIPLDVSSVLFVCTANTIDTIPPPLLDRMEVIELSGYVSAEKVNIAKGYLIPQAKAACGLKDANVNISDDAIKGLISYYAHESGVRNLKKSIEKIFRKTSFSIVKEIDDELNSKEKSTGKSGKKTSPQSSEDAANKEASSVPLKVPDKVNIEIEEKDLTKYLGPPIYTSQRLYDTTPPGVVMGLGWTPMGGVSMYVETIVKNILSSNSTPSLERTGQLGDVMKESSEISYSFSKSFLSKHFPNNKFFEHARLHMHCPEGSISKDGPSAGITMATSLLSLALDTPVPATTAMTGELTLTGKILRIGGLREKTVAAKLSGMKEILFPKSNLADWEQLPDYVKEGLTGVPVAWYDDVFKRVFSNIDAEKCNNLWPNLIKSSSKQHQISPSH.

A mitochondrion-targeting transit peptide spans 1–36 (MITRLSGACLRRSGAKRNWPREHLVHRSLLASFSTT). The span at 55 to 82 (KSKEPKDNKPLDNKNDPKKTHNEDESHT) shows a compositional bias: basic and acidic residues. 2 disordered regions span residues 55 to 142 (KSKE…MPLN) and 262 to 314 (IPPK…ESTP). The segment covering 128–139 (FELGGEENEDEM) has biased composition (acidic residues). A Lon N-terminal domain is found at 162–425 (LLALPIARRP…KALYVLKKEL (264 aa)). A compositionally biased stretch (basic and acidic residues) spans 293–311 (VKSDLKQDNGKEEPEKEVE). 578–585 (GPPGVGKT) contacts ATP. The segment at 791 to 820 (NSKEKSTGKSGKKTSPQSSEDAANKEASSV) is disordered. The 187-residue stretch at 854-1040 (TTPPGVVMGL…DDVFKRVFSN (187 aa)) folds into the Lon proteolytic domain. Active-site residues include Ser-946 and Lys-989.

Belongs to the peptidase S16 family. Homohexamer or homoheptamer. Organized in a ring with a central cavity.

Its subcellular location is the mitochondrion matrix. The catalysed reaction is Hydrolysis of proteins in presence of ATP.. ATP-dependent serine protease that mediates the selective degradation of misfolded, unassembled or oxidatively damaged polypeptides as well as certain short-lived regulatory proteins in the mitochondrial matrix. May also have a chaperone function in the assembly of inner membrane protein complexes. Participates in the regulation of mitochondrial gene expression and in the maintenance of the integrity of the mitochondrial genome. Binds to mitochondrial DNA in a site-specific manner. The protein is Lon protease homolog, mitochondrial (pim1) of Schizosaccharomyces pombe (strain 972 / ATCC 24843) (Fission yeast).